We begin with the raw amino-acid sequence, 398 residues long: Chalcone synthase (398 aa).

C167 is a catalytic residue.

The protein belongs to the thiolase-like superfamily. Chalcone/stilbene synthases family.

The enzyme catalyses (E)-4-coumaroyl-CoA + 3 malonyl-CoA + 3 H(+) = 2',4,4',6'-tetrahydroxychalcone + 3 CO2 + 4 CoA. Its pathway is secondary metabolite biosynthesis; flavonoid biosynthesis. Its function is as follows. The primary product of this enzyme is 4,2',4',6'-tetrahydroxychalcone (also termed naringenin-chalcone or chalcone) which can under specific conditions spontaneously isomerize into naringenin. This is Chalcone synthase (CHS) from Callistephus chinensis (China aster).